A 333-amino-acid chain; its full sequence is Biotin synthase (333 aa).

The region spanning 47–276 (FFKNQMEFCS…KSEIRLCGGR (230 aa)) is the Radical SAM core domain. Residues Cys65, Cys69, and Cys72 each contribute to the [4Fe-4S] cluster site. 4 residues coordinate [2Fe-2S] cluster: Cys109, Cys141, Cys201, and Arg271.

It belongs to the radical SAM superfamily. Biotin synthase family. As to quaternary structure, homodimer. [4Fe-4S] cluster serves as cofactor. Requires [2Fe-2S] cluster as cofactor.

It catalyses the reaction (4R,5S)-dethiobiotin + (sulfur carrier)-SH + 2 reduced [2Fe-2S]-[ferredoxin] + 2 S-adenosyl-L-methionine = (sulfur carrier)-H + biotin + 2 5'-deoxyadenosine + 2 L-methionine + 2 oxidized [2Fe-2S]-[ferredoxin]. The protein operates within cofactor biosynthesis; biotin biosynthesis; biotin from 7,8-diaminononanoate: step 2/2. Catalyzes the conversion of dethiobiotin (DTB) to biotin by the insertion of a sulfur atom into dethiobiotin via a radical-based mechanism. This Sulfurihydrogenibium sp. (strain YO3AOP1) protein is Biotin synthase.